A 117-amino-acid polypeptide reads, in one-letter code: Large ribosomal subunit protein bL20 (117 aa).

The protein belongs to the bacterial ribosomal protein bL20 family.

Its function is as follows. Binds directly to 23S ribosomal RNA and is necessary for the in vitro assembly process of the 50S ribosomal subunit. It is not involved in the protein synthesizing functions of that subunit. The protein is Large ribosomal subunit protein bL20 of Rickettsia massiliae (strain Mtu5).